The primary structure comprises 413 residues: Short-chain specific acyl-CoA dehydrogenase, mitochondrial (413 aa).

The transit peptide at 1 to 24 directs the protein to the mitochondrion; the sequence is MAAALLARACGPVRGALWPRDCRR. Threonine 27 is modified (phosphothreonine). N6-acetyllysine; alternate is present on lysine 51. Residue lysine 51 is modified to N6-succinyllysine; alternate. Residue lysine 72 is modified to N6-acetyllysine. The residue at position 129 (lysine 129) is an N6-acetyllysine; alternate. Residue lysine 129 is modified to N6-succinyllysine; alternate. Residues 152 to 161 and 185 to 187 contribute to the FAD site; these read FALSEPGNGS and WIT. Residue serine 161 coordinates substrate. Lysine 208 carries the N6-acetyllysine modification. Lysine 262 carries the N6-acetyllysine; alternate modification. Lysine 262 is subject to N6-succinyllysine; alternate. 269–272 contributes to the substrate binding site; sequence DMGR. Arginine 297 provides a ligand contact to FAD. Residue lysine 306 is modified to N6-acetyllysine; alternate. An N6-succinyllysine; alternate modification is found at lysine 306. FAD is bound by residues glutamine 308 and 366-370; that span reads QILGG. The active-site Proton acceptor is the glutamate 393. Glycine 394 lines the substrate pocket. 395 to 397 is a binding site for FAD; it reads TSE.

This sequence belongs to the acyl-CoA dehydrogenase family. As to quaternary structure, homotetramer. FAD is required as a cofactor.

The protein resides in the mitochondrion matrix. The catalysed reaction is a short-chain 2,3-saturated fatty acyl-CoA + oxidized [electron-transfer flavoprotein] + H(+) = a short-chain (2E)-enoyl-CoA + reduced [electron-transfer flavoprotein]. It catalyses the reaction butanoyl-CoA + oxidized [electron-transfer flavoprotein] + H(+) = (2E)-butenoyl-CoA + reduced [electron-transfer flavoprotein]. The enzyme catalyses pentanoyl-CoA + oxidized [electron-transfer flavoprotein] + H(+) = (2E)-pentenoyl-CoA + reduced [electron-transfer flavoprotein]. It carries out the reaction hexanoyl-CoA + oxidized [electron-transfer flavoprotein] + H(+) = (2E)-hexenoyl-CoA + reduced [electron-transfer flavoprotein]. It functions in the pathway lipid metabolism; mitochondrial fatty acid beta-oxidation. In terms of biological role, short-chain specific acyl-CoA dehydrogenase is one of the acyl-CoA dehydrogenases that catalyze the first step of mitochondrial fatty acid beta-oxidation, an aerobic process breaking down fatty acids into acetyl-CoA and allowing the production of energy from fats. The first step of fatty acid beta-oxidation consists in the removal of one hydrogen from C-2 and C-3 of the straight-chain fatty acyl-CoA thioester, resulting in the formation of trans-2-enoyl-CoA. Among the different mitochondrial acyl-CoA dehydrogenases, short-chain specific acyl-CoA dehydrogenase acts specifically on acyl-CoAs with saturated 4 to 6 carbons long primary chains. In Sus scrofa (Pig), this protein is Short-chain specific acyl-CoA dehydrogenase, mitochondrial (ACADS).